The following is a 156-amino-acid chain: Deoxyuridine 5'-triphosphate nucleotidohydrolase (156 aa).

Residues 76-78 (RSG), asparagine 89, 93-95 (TVD), and lysine 103 contribute to the substrate site.

The protein belongs to the dUTPase family. Mg(2+) is required as a cofactor.

The catalysed reaction is dUTP + H2O = dUMP + diphosphate + H(+). It functions in the pathway pyrimidine metabolism; dUMP biosynthesis; dUMP from dCTP (dUTP route): step 2/2. Its function is as follows. This enzyme is involved in nucleotide metabolism: it produces dUMP, the immediate precursor of thymidine nucleotides and it decreases the intracellular concentration of dUTP so that uracil cannot be incorporated into DNA. This Rhizobium johnstonii (strain DSM 114642 / LMG 32736 / 3841) (Rhizobium leguminosarum bv. viciae) protein is Deoxyuridine 5'-triphosphate nucleotidohydrolase.